We begin with the raw amino-acid sequence, 77 residues long: Conotoxin Vc6.14 (77 aa).

Positions 1–19 (MEKLTILLLVAAVLMSTQA) are cleaved as a signal peptide. Residues 20–37 (MFQGGGEKRPKDKIKFLS) constitute a propeptide that is removed on maturation. 3 disulfide bridges follow: cysteine 51-cysteine 65, cysteine 58-cysteine 69, and cysteine 64-cysteine 74.

This sequence belongs to the conotoxin O2 superfamily. Expressed by the venom duct.

The protein resides in the secreted. Inhibits voltage-gated ion channels. This chain is Conotoxin Vc6.14, found in Conus victoriae (Queen Victoria cone).